The sequence spans 528 residues: Tyrosine--tRNA ligase, cytoplasmic (528 aa).

Met1 carries the post-translational modification N-acetylmethionine. An N-acetylglycine; in Tyrosine--tRNA ligase, cytoplasmic, N-terminally processed modification is found at Gly2. Position 39 (Tyr39) interacts with L-tyrosine. Tyr39 provides a ligand contact to trans-resveratrol. Positions 44 to 52 (TTGKPHVAY) match the 'HIGH' region motif. Residues Tyr166, Gln170, Asp173, and Gln188 each coordinate L-tyrosine. 2 residues coordinate trans-resveratrol: Gln170 and Asp173. Lys197 carries the post-translational modification N6-acetyllysine. Ser205 is subject to Phosphoserine. The residue at position 206 (Lys206) is an N6-acetyllysine. The 'KMSKS' region signature appears at 222-226 (KMSSS). The short motif at 242 to 247 (KKKLKK) is the Nuclear localization signal element. The interval 339–363 (AAYPDPSKQKPPAKGPAKNSEPEEV) is disordered. Residues 364–468 (IPSRLDIRVG…AGSAPGERVF (105 aa)) enclose the tRNA-binding domain. Ser386 is subject to Phosphoserine. Lys474, Lys482, and Lys490 each carry N6-acetyllysine.

It belongs to the class-I aminoacyl-tRNA synthetase family. As to quaternary structure, homodimer. Interacts (when binding to resveratrol) with PARP1; interaction stimulates the poly-ADP-ribosyltransferase activity of PARP1.

The protein resides in the cytoplasm. The protein localises to the nucleus. It catalyses the reaction tRNA(Tyr) + L-tyrosine + ATP = L-tyrosyl-tRNA(Tyr) + AMP + diphosphate + H(+). Its activity is regulated as follows. Resveratrol strongly inhibits the tyrosine--tRNA ligase activity. Functionally, tyrosine--tRNA ligase that catalyzes the attachment of tyrosine to tRNA(Tyr) in a two-step reaction: tyrosine is first activated by ATP to form Tyr-AMP and then transferred to the acceptor end of tRNA(Tyr). Also acts as a positive regulator of poly-ADP-ribosylation in the nucleus, independently of its tyrosine--tRNA ligase activity. Activity is switched upon resveratrol-binding: resveratrol strongly inhibits the tyrosine--tRNA ligase activity and promotes relocalization to the nucleus, where YARS1 specifically stimulates the poly-ADP-ribosyltransferase activity of PARP1. The protein is Tyrosine--tRNA ligase, cytoplasmic (Yars1) of Mus musculus (Mouse).